The following is a 79-amino-acid chain: MPKRVLQGVVVSDKNDKTVVVKVERRYSHPLLKKTVRQSKKYKAHDESNQFKIGDQIFIQESKPISKDKRWIVVKDSVA.

It belongs to the universal ribosomal protein uS17 family. In terms of assembly, part of the 30S ribosomal subunit.

Functionally, one of the primary rRNA binding proteins, it binds specifically to the 5'-end of 16S ribosomal RNA. This chain is Small ribosomal subunit protein uS17, found in Bartonella henselae (strain ATCC 49882 / DSM 28221 / CCUG 30454 / Houston 1) (Rochalimaea henselae).